The chain runs to 509 residues: MAYQVLLICLVSTIVFAYILWRKQSKKNLPPSPKALPIIGHLHLVSPIPHQDFYKLSTRHGPIMQLFLGSVPCVVASTAEAAKEFLKTHEINFSNRPGQNVAVKGLAYDSQDFLFAFAPFGPYWKFMKKLCMSELLSGRMMDQFLPVRQQETKRFISRVFRKGVAGEAVDFGDELMTLSNNIVSRMTLSQKTSENDNQAEEMKKLVSNIAELMGKFNVSDFIWYLKPFDLQGFNRKIKETRDRFDVVVDGIIKQRQEERRKNKETGTAKQFKDMLDVLLDMHEDENAEIKLDKKNIKAFIMDIFVAGTDTSAVSIEWAMAELINNPDVLEKARQEIDAVVGKSRMVEESDIANLPYLQAIVRETLRLHPGGPLVVRESSKSAVVCGYDIPAKTRLFVNVWAIGRDPNHWEKPFEFRPERFIRDGQNQLDVRGQHYHFIPFGSGRRTCPGASLAWQVVPVNLAIIIQCFQWKLVGGNGKVDMEEKSGITLPRANPIICVPVPRINPFPTI.

Cys447 lines the heme pocket.

This sequence belongs to the cytochrome P450 family. The cofactor is heme.

The protein localises to the membrane. The catalysed reaction is (6aR,11aR)-3,9-dihydroxypterocarpan + reduced [NADPH--hemoprotein reductase] + O2 = (6aS,11aS)-3,6a,9-trihydroxypterocarpan + oxidized [NADPH--hemoprotein reductase] + H2O + H(+). Cytochrome P450 involved in the biosynthesis of the phytoalexin glyceollin. Stereospecific for (6aR,11aR)-3,9-dihydroxypterocarpan. The sequence is that of 3,9-dihydroxypterocarpan 6A-monooxygenase (CYP93A1) from Glycine max (Soybean).